The sequence spans 185 residues: Dual-action ribosomal maturation protein DarP (185 aa).

It belongs to the DarP family.

The protein resides in the cytoplasm. Its function is as follows. Member of a network of 50S ribosomal subunit biogenesis factors which assembles along the 30S-50S interface, preventing incorrect 23S rRNA structures from forming. Promotes peptidyl transferase center (PTC) maturation. This chain is Dual-action ribosomal maturation protein DarP, found in Vibrio vulnificus (strain YJ016).